Consider the following 216-residue polypeptide: Urease accessory protein UreG (216 aa).

A GTP-binding site is contributed by 25–32 (GPVGSGKT).

Belongs to the SIMIBI class G3E GTPase family. UreG subfamily. As to quaternary structure, homodimer. UreD, UreF and UreG form a complex that acts as a GTP-hydrolysis-dependent molecular chaperone, activating the urease apoprotein by helping to assemble the nickel containing metallocenter of UreC. The UreE protein probably delivers the nickel.

Its subcellular location is the cytoplasm. Its function is as follows. Facilitates the functional incorporation of the urease nickel metallocenter. This process requires GTP hydrolysis, probably effectuated by UreG. The polypeptide is Urease accessory protein UreG (Burkholderia thailandensis (strain ATCC 700388 / DSM 13276 / CCUG 48851 / CIP 106301 / E264)).